The following is a 159-amino-acid chain: NADH-quinone oxidoreductase subunit B (159 aa).

[4Fe-4S] cluster is bound by residues Cys-32, Cys-33, Cys-97, and Cys-126.

This sequence belongs to the complex I 20 kDa subunit family. As to quaternary structure, NDH-1 is composed of 14 different subunits. Subunits NuoB, C, D, E, F, and G constitute the peripheral sector of the complex. It depends on [4Fe-4S] cluster as a cofactor.

Its subcellular location is the cell inner membrane. It carries out the reaction a quinone + NADH + 5 H(+)(in) = a quinol + NAD(+) + 4 H(+)(out). Its function is as follows. NDH-1 shuttles electrons from NADH, via FMN and iron-sulfur (Fe-S) centers, to quinones in the respiratory chain. The immediate electron acceptor for the enzyme in this species is believed to be ubiquinone. Couples the redox reaction to proton translocation (for every two electrons transferred, four hydrogen ions are translocated across the cytoplasmic membrane), and thus conserves the redox energy in a proton gradient. The chain is NADH-quinone oxidoreductase subunit B from Helicobacter pylori (strain P12).